A 382-amino-acid chain; its full sequence is Ribosomal RNA large subunit methyltransferase F (382 aa).

Disordered stretches follow at residues methionine 1–aspartate 53 and asparagine 269–leucine 288. Positions alanine 8–arginine 24 are enriched in basic residues. Residues asparagine 269–serine 286 show a composition bias toward basic and acidic residues.

It belongs to the methyltransferase superfamily. METTL16/RlmF family.

It is found in the cytoplasm. It carries out the reaction adenosine(1618) in 23S rRNA + S-adenosyl-L-methionine = N(6)-methyladenosine(1618) in 23S rRNA + S-adenosyl-L-homocysteine + H(+). Its function is as follows. Specifically methylates the adenine in position 1618 of 23S rRNA. In Shewanella woodyi (strain ATCC 51908 / MS32), this protein is Ribosomal RNA large subunit methyltransferase F.